Consider the following 1102-residue polypeptide: Ubiquitin carboxyl-terminal hydrolase 7 (1102 aa).

The span at Met1–Gln10 shows a compositional bias: low complexity. A disordered region spans residues Met1–Gln38. The interval Met1 to Lys208 is interaction with TSPYL5. At Ser18 the chain carries Phosphoserine. A compositionally biased stretch (acidic residues) spans Glu19–Asp31. The residue at position 49 (Ser49) is a Phosphoserine. Positions Asn53–Lys208 are interaction with p53/TP53, MDM2 and EBNA1. Residues Glu68–Val195 enclose the MATH domain. The tract at residues Thr70–Trp205 is necessary for nuclear localization. In terms of domain architecture, USP spans Val214–Glu521. Cys223 functions as the Nucleophile in the catalytic mechanism. The active-site Proton acceptor is the His464. The interval Leu622–Lys801 is interaction with ICP0/VMW110. At Lys869 the chain carries N6-acetyllysine; alternate. A Glycyl lysine isopeptide (Lys-Gly) (interchain with G-Cter in SUMO2); alternate cross-link involves residue Lys869. A Glycyl lysine isopeptide (Lys-Gly) (interchain with G-Cter in ubiquitin); alternate cross-link involves residue Lys869. A Glycyl lysine isopeptide (Lys-Gly) (interchain with G-Cter in SUMO2) cross-link involves residue Lys882. Position 963 is a phosphoserine (Ser963). 2 positions are modified to N6-acetyllysine: Lys1084 and Lys1096.

This sequence belongs to the peptidase C19 family. In terms of assembly, monomer. Homodimer. Part of a complex with DAXX, MDM2, RASSF1 and USP7. Part of a complex with DAXX, MDM2 and USP7. Interacts with MDM2; the interaction is independent of p53/TP53. Interacts with DAXX; the interaction is direct and independent of MDM2 and p53/TP53. Component of a complex composed of KMT2E/MLL5 (isoform 3), OGT (isoform 1) and USP7; the complex stabilizes KMT2E/MLL5, preventing KMT2E/MLL5 ubiquitination and proteasomal-mediated degradation. Interacts (via MATH domain) with KMT2E/MLL5 isoform 3. Interacts with OGT isoform 1. Interacts with FOXO4; the interaction is enhanced in presence of hydrogen peroxide and occurs independently of p53/TP53. Interacts with p53/TP53; the interaction is enhanced in response to DNA damage. Interacts with TSPYL5; this impairs interaction with p53/TP53. Interacts with PTEN; the interaction is direct. Interacts with ATXN1 and the strength of interaction is influenced by the length of the poly-Gln region in ATXN1. A weaker interaction seen with mutants having longer poly-Gln regions. Interacts with KIAA1530/UVSSA. Interacts with ABRAXAS2; the interaction is direct. Identified in a complex with TP53/p53 and ABRAXAS2. Interacts with MEX3C and antagonizes its ability to degrade mRNA. Interacts with DNMT1 and UHRF1. Interacts with FOXP3. Interacts (via MATH domain) with RNF220. Associated component of the Polycomb group (PcG) multiprotein PRC1-like complex. Interacts with EPOP. Interacts with OTUD4 and USP9X; the interaction is direct. Interacts with CRY2. Interacts with REST. Interacts with ERCC6. Part of a complex consisting of USP7, MAGEL2 and TRIM27; directly interacts with MAGEL2; directly interacts with TRIM27. (Microbial infection) Isoform 1 and isoform 2 interact with herpesvirus 1 trans-acting transcriptional protein ICP0/VMW110. Binding to ICP0/VMW110 may modulate the substrate specificity or activity of USP7 to stabilize viral proteins. As to quaternary structure, (Microbial infection) Interacts with Epstein-Barr virus EBNA1; the interaction is independent and simultaneous to EBNA1 interaction with USP7 as well as necessary for PML nuclear bodies disruption by EBNA1. EBNA1, USP7 and CSNK2B form a ternary complex. EBNA1 shows a 10-fold higher affinity than p53/TP53 and can compete with it for USP7 binding. In terms of assembly, (Microbial infection) Interacts with human cytomegalovirus proteins UL35 and UL35A; these interactions inhibit the ability of USP7 to form nuclear bodies. (Microbial infection) Interacts with herpes virus 8/HHV-8 proteins vIRF-1 and vIRF-3; these interactions may disrupt TP53 signaling pathway during viral infection by decreasing the availability of USP7 for deubiquitinating and stabilizing TP53. As to quaternary structure, (Microbial infection) Interacts with herpes virus 8/HHV-8 protein vIRF-2; this interaction modulates antiviral signaling via disruption of USP7 interactions with innate immune signaling proteins TRAF3 and TRAF6 thus affecting their ubiquitination. In terms of processing, isoform 1: Phosphorylated. Isoform 1 is phosphorylated at positions Ser-18 and Ser-963. Isoform 2: Not phosphorylated. Post-translationally, isoform 1: Polyneddylated. Isoform 2: Not Polyneddylated. Isoform 1 and isoform 2: Not sumoylated. In terms of processing, isoform 1 and isoform 2: Polyubiquitinated by herpesvirus 1 trans-acting transcriptional protein ICP0/VMW110; leading to its subsequent proteasomal degradation. Isoform 1: Ubiquitinated at Lys-869. Expressed in neural progenitor cells (at protein level). Widely expressed. Overexpressed in prostate cancer.

It is found in the nucleus. Its subcellular location is the cytoplasm. The protein localises to the PML body. It localises to the chromosome. It carries out the reaction Thiol-dependent hydrolysis of ester, thioester, amide, peptide and isopeptide bonds formed by the C-terminal Gly of ubiquitin (a 76-residue protein attached to proteins as an intracellular targeting signal).. Its activity is regulated as follows. Inhibited by N-ethyl-maleimide (NEM) and divalent cations. Tolerates high concentrations of NaCl but is inhibited at concentrations of 195 mM and higher. Its function is as follows. Hydrolase that deubiquitinates target proteins such as ARMC5, FOXO4, DEPTOR, KAT5, p53/TP53, MDM2, ERCC6, DNMT1, UHRF1, PTEN, KMT2E/MLL5 and DAXX. Together with DAXX, prevents MDM2 self-ubiquitination and enhances the E3 ligase activity of MDM2 towards p53/TP53, thereby promoting p53/TP53 ubiquitination and proteasomal degradation. Deubiquitinates p53/TP53, preventing degradation of p53/TP53, and enhances p53/TP53-dependent transcription regulation, cell growth repression and apoptosis. Deubiquitinates p53/TP53 and MDM2 and strongly stabilizes p53/TP53 even in the presence of excess MDM2, and also induces p53/TP53-dependent cell growth repression and apoptosis. Deubiquitination of FOXO4 in presence of hydrogen peroxide is not dependent on p53/TP53 and inhibits FOXO4-induced transcriptional activity. In association with DAXX, is involved in the deubiquitination and translocation of PTEN from the nucleus to the cytoplasm, both processes that are counteracted by PML. Deubiquitinates KMT2E/MLL5 preventing KMT2E/MLL5 proteasomal-mediated degradation. Involved in cell proliferation during early embryonic development. Involved in transcription-coupled nucleotide excision repair (TC-NER) in response to UV damage: recruited to DNA damage sites following interaction with KIAA1530/UVSSA and promotes deubiquitination of ERCC6, preventing UV-induced degradation of ERCC6. Involved in maintenance of DNA methylation via its interaction with UHRF1 and DNMT1: acts by mediating deubiquitination of UHRF1 and DNMT1, preventing their degradation and promoting DNA methylation by DNMT1. Deubiquitinates alkylation repair enzyme ALKBH3. OTUD4 recruits USP7 and USP9X to stabilize ALKBH3, thereby promoting the repair of alkylated DNA lesions. Acts as a chromatin regulator via its association with the Polycomb group (PcG) multiprotein PRC1-like complex; may act by deubiquitinating components of the PRC1-like complex. Able to mediate deubiquitination of histone H2B; it is however unsure whether this activity takes place in vivo. Exhibits a preference towards 'Lys-48'-linked ubiquitin chains. Increases regulatory T-cells (Treg) suppressive capacity by deubiquitinating and stabilizing the transcription factor FOXP3 which is crucial for Treg cell function. Plays a role in the maintenance of the circadian clock periodicity via deubiquitination and stabilization of the CRY1 and CRY2 proteins. Deubiquitinates REST, thereby stabilizing REST and promoting the maintenance of neural progenitor cells. Deubiquitinates SIRT7, inhibiting SIRT7 histone deacetylase activity and regulating gluconeogenesis. Involved in the regulation of WASH-dependent actin polymerization at the surface of endosomes and the regulation of endosomal protein recycling. It maintains optimal WASH complex activity and precise F-actin levels via deubiquitination of TRIM27 and WASHC1. Mediates the deubiquitination of phosphorylated DEPTOR, promoting its stability and leading to decreased mTORC1 signaling. In terms of biological role, (Microbial infection) Contributes to the overall stabilization and trans-activation capability of the herpesvirus 1 trans-acting transcriptional protein ICP0/VMW110 during HSV-1 infection. Functionally, (Microbial infection) Upon infection with Epstein-Barr virus, the interaction with viral EBNA1 increases the association of USP7 with PML proteins, which is required for the polyubiquitylation and degradation of PML. The chain is Ubiquitin carboxyl-terminal hydrolase 7 from Homo sapiens (Human).